The primary structure comprises 217 residues: Large ribosomal subunit protein uL3 (217 aa).

Over residues 134–146 the composition is skewed to polar residues; it reads GRATHGNSRSHNV. Residues 134 to 154 form a disordered region; the sequence is GRATHGNSRSHNVPGSIGMAQ. Gln-154 bears the N5-methylglutamine mark.

The protein belongs to the universal ribosomal protein uL3 family. As to quaternary structure, part of the 50S ribosomal subunit. Forms a cluster with proteins L14 and L19. Methylated by PrmB.

Functionally, one of the primary rRNA binding proteins, it binds directly near the 3'-end of the 23S rRNA, where it nucleates assembly of the 50S subunit. The chain is Large ribosomal subunit protein uL3 from Burkholderia lata (strain ATCC 17760 / DSM 23089 / LMG 22485 / NCIMB 9086 / R18194 / 383).